The primary structure comprises 485 residues: MDLTKLTAHELKDMLSNKEVKAEEITKAFLDRINLVDNKLGAYLYVSEEEAIKKAKEIDGKIEKNEELKALSGIPVGIKDNINVKGMQNTCASKILEGYTSPYDAHVTEKIKQEEGIILGKLNMDEFAMGSSTENSAFKLAKNPWDLERVPGGSSGGSAVAVAGSEATLSLGTDTGGSVRQPASFCGVVGLKPTYGRISRSGVVAFGSTLDQVGPMGKDVEDCALLTSVIAGLDKKDFTTVDKEVPDYKKSLTKDIKGKRIGIPKEFFGDGLDKNVRKSVEEAIKVLEANGAEVKPCSLPLMDYALSAYYIISSAEASSNLARFDGIRYGYRSKNFKDAKDIYLKSRSEGFGDEVKRRIMLGTYVLSAGYYDAYYKKALKVRKLIKDDFQRVFKEFDAIVSPTSPTTAFKVGEKKDDVMSMYLSDIYTVPISVAGVPAISLPCGMIDGLPVGLQIISDYFKEDVLFNLAYNYEQSVDFHKMRADF.

Catalysis depends on charge relay system residues lysine 79 and serine 154. Catalysis depends on serine 178, which acts as the Acyl-ester intermediate.

The protein belongs to the amidase family. GatA subfamily. As to quaternary structure, heterotrimer of A, B and C subunits.

The catalysed reaction is L-glutamyl-tRNA(Gln) + L-glutamine + ATP + H2O = L-glutaminyl-tRNA(Gln) + L-glutamate + ADP + phosphate + H(+). Functionally, allows the formation of correctly charged Gln-tRNA(Gln) through the transamidation of misacylated Glu-tRNA(Gln) in organisms which lack glutaminyl-tRNA synthetase. The reaction takes place in the presence of glutamine and ATP through an activated gamma-phospho-Glu-tRNA(Gln). This chain is Glutamyl-tRNA(Gln) amidotransferase subunit A, found in Clostridium botulinum (strain ATCC 19397 / Type A).